We begin with the raw amino-acid sequence, 502 residues long: Glutamate--tRNA ligase (502 aa).

The short motif at 9-19 (PSPTGDPHVGT) is the 'HIGH' region element. Residues Cys106, Cys108, Cys133, and His135 each coordinate Zn(2+). The 'KMSKS' region motif lies at 250–254 (KLSKR). Position 253 (Lys253) interacts with ATP.

Belongs to the class-I aminoacyl-tRNA synthetase family. Glutamate--tRNA ligase type 1 subfamily. In terms of assembly, monomer. It depends on Zn(2+) as a cofactor.

It localises to the cytoplasm. The enzyme catalyses tRNA(Glu) + L-glutamate + ATP = L-glutamyl-tRNA(Glu) + AMP + diphosphate. Functionally, catalyzes the attachment of glutamate to tRNA(Glu) in a two-step reaction: glutamate is first activated by ATP to form Glu-AMP and then transferred to the acceptor end of tRNA(Glu). The chain is Glutamate--tRNA ligase from Protochlamydia amoebophila (strain UWE25).